Consider the following 208-residue polypeptide: UPF0323 lipoprotein HH_0014 (208 aa).

An N-terminal signal peptide occupies residues 1–26 (MKHIHKIKNYAMVGGLGVMAVFALNA). Cysteine 27 is lipidated: N-palmitoyl cysteine. A lipid anchor (S-diacylglycerol cysteine) is attached at cysteine 27. Positions 148-208 (ANSQRNYKSP…TNRNTGSMGS (61 aa)) are disordered. Composition is skewed to low complexity over residues 169-185 (SAKT…SGKS) and 193-208 (SSQS…SMGS).

Belongs to the UPF0323 family.

It is found in the cell membrane. The sequence is that of UPF0323 lipoprotein HH_0014 from Helicobacter hepaticus (strain ATCC 51449 / 3B1).